Reading from the N-terminus, the 418-residue chain is Serine hydroxymethyltransferase (418 aa).

(6S)-5,6,7,8-tetrahydrofolate is bound by residues L121 and 125–127 (GHL). K230 is modified (N6-(pyridoxal phosphate)lysine). Residues E246 and 355-357 (SPF) each bind (6S)-5,6,7,8-tetrahydrofolate.

It belongs to the SHMT family. As to quaternary structure, homodimer. It depends on pyridoxal 5'-phosphate as a cofactor.

The protein resides in the cytoplasm. The enzyme catalyses (6R)-5,10-methylene-5,6,7,8-tetrahydrofolate + glycine + H2O = (6S)-5,6,7,8-tetrahydrofolate + L-serine. It participates in one-carbon metabolism; tetrahydrofolate interconversion. The protein operates within amino-acid biosynthesis; glycine biosynthesis; glycine from L-serine: step 1/1. Catalyzes the reversible interconversion of serine and glycine with tetrahydrofolate (THF) serving as the one-carbon carrier. This reaction serves as the major source of one-carbon groups required for the biosynthesis of purines, thymidylate, methionine, and other important biomolecules. Also exhibits THF-independent aldolase activity toward beta-hydroxyamino acids, producing glycine and aldehydes, via a retro-aldol mechanism. This chain is Serine hydroxymethyltransferase, found in Streptococcus pneumoniae (strain Hungary19A-6).